A 277-amino-acid polypeptide reads, in one-letter code: DPQFVLAQNVGTHHDLLDICLRRATVQGAQHVFQHVVPQEGKPVTNQKSSGRCWIFSCLNVMRLPFMKKLNIEEFEFSQSYVFFWDKVERCYFFLNAFVDTAQKKEPEDGRLVQYLLMNPTNDGGQWDMLVNIIEKYGVVPKKCFPESHTTEASRRMNDILNHKMREFCIRLRNMVHSGATKAEISATEDTMMEEIFRVVCICLGNPPETFTWEYRDKDKNYQKIGPITPLEFYRQHVKPLFNMEDKICFVNDPRPQHKYNRLYTVDYLSNMVGGRK.

The active site involves C53.

Belongs to the peptidase C1 family. In terms of assembly, homohexamer. Interacts with NUDT12 (via ANK repeats).

The protein resides in the cytoplasm. It localises to the cytoplasmic granule. The enzyme catalyses Inactivates bleomycin B2 (a cytotoxic glycometallopeptide) by hydrolysis of a carboxyamide bond of beta-aminoalanine, but also shows general aminopeptidase activity. The specificity varies somewhat with source, but amino acid arylamides of Met, Leu and Ala are preferred.. With respect to regulation, strongly inhibited by leupeptin, puromycin, NEM, and divalent cations. Its function is as follows. The normal physiological role of BLM hydrolase is unknown, but it catalyzes the inactivation of the antitumor drug BLM (a glycopeptide) by hydrolyzing the carboxamide bond of its B-aminoalaninamide moiety thus protecting normal and malignant cells from BLM toxicity. The polypeptide is Bleomycin hydrolase (BLMH) (Oryctolagus cuniculus (Rabbit)).